The chain runs to 175 residues: Disulfide bond formation protein B 2 (175 aa).

The Cytoplasmic portion of the chain corresponds to 1 to 9 (MYLARTRFL). Residues 10-26 (FFLASLACASIIGVAFY) form a helical membrane-spanning segment. At 27-44 (LQQAVGLDPCTLCMVQRA) the chain is on the periplasmic side. An intrachain disulfide couples Cys36 to Cys39. The helical transmembrane segment at 45–61 (AFIACGVLALCAACHAP) threads the bilayer. At 62-68 (GPTGTRR) the chain is on the cytoplasmic side. Residues 69–85 (YSLGLLLVALAGLAGAG) traverse the membrane as a helical segment. The Periplasmic segment spans residues 86 to 142 (TQVWLQTASADQLIPFITRLEQILSLLSLDMCIDRLRSDALFCAEITWTLFGISLPE). Residues 143 to 161 (WSLLAFTGLALLPLYPLFS) form a helical membrane-spanning segment. Topologically, residues 162–175 (ELSHWLATRDRGGY) are cytoplasmic.

Belongs to the DsbB family.

The protein localises to the cell inner membrane. Required for disulfide bond formation in some periplasmic proteins. Acts by oxidizing the DsbA protein. The sequence is that of Disulfide bond formation protein B 2 from Pseudomonas syringae pv. syringae (strain B728a).